A 326-amino-acid polypeptide reads, in one-letter code: Tetraacyldisaccharide 4'-kinase (326 aa).

Position 55-62 (55-62 (TAGGNGKT)) interacts with ATP.

It belongs to the LpxK family.

The enzyme catalyses a lipid A disaccharide + ATP = a lipid IVA + ADP + H(+). It functions in the pathway glycolipid biosynthesis; lipid IV(A) biosynthesis; lipid IV(A) from (3R)-3-hydroxytetradecanoyl-[acyl-carrier-protein] and UDP-N-acetyl-alpha-D-glucosamine: step 6/6. Transfers the gamma-phosphate of ATP to the 4'-position of a tetraacyldisaccharide 1-phosphate intermediate (termed DS-1-P) to form tetraacyldisaccharide 1,4'-bis-phosphate (lipid IVA). This is Tetraacyldisaccharide 4'-kinase from Erwinia tasmaniensis (strain DSM 17950 / CFBP 7177 / CIP 109463 / NCPPB 4357 / Et1/99).